The following is a 1100-amino-acid chain: cGMP-inhibited 3',5'-cyclic phosphodiesterase 3B (1100 aa).

The span at 1–11 (MRKDERERDAP) shows a compositional bias: basic and acidic residues. The tract at residues 1 to 28 (MRKDERERDAPAMRSPPPPPASAASPPE) is interaction with RAPGEF3. Positions 1–29 (MRKDERERDAPAMRSPPPPPASAASPPES) are disordered. S15 carries the post-translational modification Phosphoserine. Transmembrane regions (helical) follow at residues 69 to 89 (AGAR…LLGA), 110 to 130 (LSLS…CFLT), 140 to 160 (AGSW…FAAW), 170 to 190 (PAAA…TLAP), 198 to 218 (VLVL…LGAL), and 225 to 245 (LLSC…DHFF). A Phosphoserine; by PKB/AKT1 or PKB/AKT2 modification is found at S273. A phosphoserine mark is found at S274 and S421. 2 disordered regions span residues 400–423 (RKLH…SSGA) and 570–590 (EPDG…SVFS). Polar residues predominate over residues 408-423 (GRTSFPTPQLRRSSGA). The tract at residues 415-439 (PQLRRSSGASSLLTNEHCSRWDRSS) is interaction with PIK3R6. Residues 573 to 583 (GTDHPSEKSGE) show a composition bias toward basic and acidic residues. One can recognise a PDEase domain in the interval 627–1061 (PNIDQEVSLD…KIWKEIIEEE (435 aa)). H713 (proton donor) is an active-site residue. H713 is an AMP binding site. Residues H717, H797, D798, and D913 each contribute to the Mg(2+) site. AMP contacts are provided by D798, D913, and Q964. Over residues 993-1024 (EEGDDTESDDDDDDDDGDGGEELDSDDEETED) the composition is skewed to acidic residues. The interval 993–1033 (EEGDDTESDDDDDDDDGDGGEELDSDDEETEDNLNPKPQRR) is disordered. The stretch at 1044–1079 (MHHLTENHKIWKEIIEEEEEKCKAEGNKLQVDNASL) forms a coiled coil.

Belongs to the cyclic nucleotide phosphodiesterase family. PDE3 subfamily. As to quaternary structure, homodimer. Interacts with PIK3CG; regulates PDE3B activity and thereby cAMP levels in cells. Interacts with RAPGEF3 and PIK3R6; form a signaling complex that regulates phosphatidylinositol 3-kinase gamma in angiogenesis. Interacts with ABHD15; this interaction regulates PDE3B's stability and expression and, thereby, impacts the antilipolytic action of insulin. Requires Mg(2+) as cofactor. Mn(2+) serves as cofactor. Post-translationally, phosphorylation at Ser-273 mediates insulin-induced activation of PDE3B. Abundant in adipose tissues.

The protein localises to the membrane. It carries out the reaction a nucleoside 3',5'-cyclic phosphate + H2O = a nucleoside 5'-phosphate + H(+). The enzyme catalyses 3',5'-cyclic AMP + H2O = AMP + H(+). The catalysed reaction is 3',5'-cyclic GMP + H2O = GMP + H(+). With respect to regulation, inhibited by cGMP. Functionally, cyclic nucleotide phosphodiesterase with a dual-specificity for the second messengers cAMP and cGMP, which are key regulators of many important physiological processes. Regulates angiogenesis by inhibiting the cAMP-dependent guanine nucleotide exchange factor RAPGEF3 and downstream phosphatidylinositol 3-kinase gamma-mediated signaling. Controls cardiac contractility by reducing cAMP concentration in cardiocytes. This Mus musculus (Mouse) protein is cGMP-inhibited 3',5'-cyclic phosphodiesterase 3B.